A 343-amino-acid polypeptide reads, in one-letter code: Shematrin-like protein 3 (343 aa).

The signal sequence occupies residues 1–16 (MLKLVCAVVLIATVNA).

As to expression, prismatic layer of shell (at protein level).

The protein localises to the secreted. In Pinctada maxima (Silver-lipped pearl oyster), this protein is Shematrin-like protein 3.